The chain runs to 391 residues: 3-ketoacyl-CoA thiolase (391 aa).

Cys-95 acts as the Acyl-thioester intermediate in catalysis. Active-site proton acceptor residues include His-347 and Cys-377.

The protein belongs to the thiolase-like superfamily. Thiolase family. Heterotetramer of two alpha chains (FadB) and two beta chains (FadA).

The protein resides in the cytoplasm. The enzyme catalyses an acyl-CoA + acetyl-CoA = a 3-oxoacyl-CoA + CoA. Its pathway is lipid metabolism; fatty acid beta-oxidation. Catalyzes the final step of fatty acid oxidation in which acetyl-CoA is released and the CoA ester of a fatty acid two carbons shorter is formed. This Pseudomonas fluorescens (strain ATCC BAA-477 / NRRL B-23932 / Pf-5) protein is 3-ketoacyl-CoA thiolase.